A 303-amino-acid polypeptide reads, in one-letter code: ATP phosphoribosyltransferase (303 aa).

This sequence belongs to the ATP phosphoribosyltransferase family. Long subfamily. Requires Mg(2+) as cofactor.

Its subcellular location is the cytoplasm. The catalysed reaction is 1-(5-phospho-beta-D-ribosyl)-ATP + diphosphate = 5-phospho-alpha-D-ribose 1-diphosphate + ATP. Its pathway is amino-acid biosynthesis; L-histidine biosynthesis; L-histidine from 5-phospho-alpha-D-ribose 1-diphosphate: step 1/9. With respect to regulation, feedback inhibited by histidine. In terms of biological role, catalyzes the condensation of ATP and 5-phosphoribose 1-diphosphate to form N'-(5'-phosphoribosyl)-ATP (PR-ATP). Has a crucial role in the pathway because the rate of histidine biosynthesis seems to be controlled primarily by regulation of HisG enzymatic activity. This Stenotrophomonas maltophilia (strain R551-3) protein is ATP phosphoribosyltransferase.